Here is a 208-residue protein sequence, read N- to C-terminus: MQPWLWLVFSVKLSALWGSSALLQTPSSLLVQTNQTAKMSCEAKTFPKGTTIYWLRELQDSNKNKHFEFLASRTSTKGIKYGERVKKNMTLSFNSTLPFLKIMDVKPEDSGFYFCAMVGSPMVVFGTGTKLTVVDVLPTTAPTKKTTLKKKQCPTPHPKTQKGLTCGLITLSLLVACILVLLVSLSVAIHFHCMRRRARIHFMKQFHK.

Positions 1 to 21 (MQPWLWLVFSVKLSALWGSSA) are cleaved as a signal peptide. The Ig-like V-type domain maps to 22–131 (LLQTPSSLLV…MVVFGTGTKL (110 aa)). The Extracellular segment spans residues 22–168 (LLQTPSSLLV…KTQKGLTCGL (147 aa)). N-linked (GlcNAc...) asparagine glycans are attached at residues asparagine 34, asparagine 88, and asparagine 94. Cysteine 41 and cysteine 115 form a disulfide bridge. The chain crosses the membrane as a helical span at residues 169–189 (ITLSLLVACILVLLVSLSVAI). The Cytoplasmic portion of the chain corresponds to 190–208 (HFHCMRRRARIHFMKQFHK).

In terms of assembly, forms disulfide-linked heterodimers with CD8A at the cell surface. Interacts with CD3D; this interaction couples TCR-CD3 with CD8. Interacts with LCK. Post-translationally, phosphorylated as a consequence of T-cell activation. Palmitoylated at the cytoplasmic tail and thereby targets the heterodimer CD8A/CD8B to lipid rafts unlike CD8A homodimers.

The protein localises to the cell membrane. Functionally, integral membrane glycoprotein that plays an essential role in the immune response and serves multiple functions in responses against both external and internal offenses. In T-cells, functions primarily as a coreceptor for MHC class I molecule:peptide complex. The antigens presented by class I peptides are derived from cytosolic proteins while class II derived from extracellular proteins. Interacts simultaneously with the T-cell receptor (TCR) and the MHC class I proteins presented by antigen presenting cells (APCs). In turn, recruits the Src kinase LCK to the vicinity of the TCR-CD3 complex. A palmitoylation site in the cytoplasmic tail of CD8B chain contributes to partitioning of CD8 into the plasma membrane lipid rafts where signaling proteins are enriched. Once LCK recruited, it initiates different intracellular signaling pathways by phosphorylating various substrates ultimately leading to lymphokine production, motility, adhesion and activation of cytotoxic T-lymphocytes (CTLs). Additionally, plays a critical role in thymic selection of CD8+ T-cells. The polypeptide is T-cell surface glycoprotein CD8 beta chain (Cd8b) (Rattus norvegicus (Rat)).